Reading from the N-terminus, the 287-residue chain is Hydroxysteroid 11-beta-dehydrogenase 1-like protein (287 aa).

An N-terminal signal peptide occupies residues 1-22; that stretch reads MKLYAKLLLCSICVAFIAVRWS. Residues 40-66, 91-92, and 118-120 contribute to the NADP(+) site; these read GAST…TARR, DM, and NHI. Substrate is bound at residue Ser169. Catalysis depends on Tyr182, which acts as the Proton acceptor. NADP(+) is bound by residues 182-186 and 215-221; these read YASTK and GLIDTDS.

This sequence belongs to the short-chain dehydrogenases/reductases (SDR) family.

Its subcellular location is the secreted. It carries out the reaction cortisone + NADPH + H(+) = cortisol + NADP(+). Unidirectional NADP(+)-dependent cortisol dehydrogenase (in vitro). In Danio rerio (Zebrafish), this protein is Hydroxysteroid 11-beta-dehydrogenase 1-like protein (hsd11b1l).